The sequence spans 532 residues: Cocaine esterase (532 aa).

Q1 carries the pyrrolidone carboxylic acid modification. An intrachain disulfide couples C69 to C96. Residue S201 is the Acyl-ester intermediate of the active site. A glycan (N-linked (GlcNAc...) asparagine) is linked at N249. C253 and C264 are joined by a disulfide. Active-site charge relay system residues include E318 and H430. The short motif at 529 to 532 (HTEL) is the Prevents secretion from ER element.

This sequence belongs to the type-B carboxylesterase/lipase family. Monomer.

The protein resides in the endoplasmic reticulum lumen. The catalysed reaction is a carboxylic ester + H2O = an alcohol + a carboxylate + H(+). It carries out the reaction cocaine + H2O = ecgonine methyl ester + benzoate + H(+). It catalyses the reaction 2-(5Z,8Z,11Z,14Z-eicosatetraenoyl)-glycerol + H2O = glycerol + (5Z,8Z,11Z,14Z)-eicosatetraenoate + H(+). The enzyme catalyses prostaglandin E2 1-glyceryl ester + H2O = prostaglandin E2 + glycerol + H(+). The catalysed reaction is prostaglandin F2alpha 1-glyceryl ester + H2O = prostaglandin F2alpha + glycerol + H(+). Involved in the detoxification of xenobiotics and in the activation of ester and amide prodrugs. Converts monoacylglycerides to free fatty acids and glycerol. Hydrolyzes of 2-arachidonoylglycerol and prostaglandins. The protein is Cocaine esterase (CES2) of Oryctolagus cuniculus (Rabbit).